The chain runs to 190 residues: Crossover junction endodeoxyribonuclease RuvC (190 aa).

Residues D8, E67, and D139 contribute to the active site. Residues D8, E67, and D139 each contribute to the Mg(2+) site.

Belongs to the RuvC family. Homodimer which binds Holliday junction (HJ) DNA. The HJ becomes 2-fold symmetrical on binding to RuvC with unstacked arms; it has a different conformation from HJ DNA in complex with RuvA. In the full resolvosome a probable DNA-RuvA(4)-RuvB(12)-RuvC(2) complex forms which resolves the HJ. The cofactor is Mg(2+).

The protein resides in the cytoplasm. The enzyme catalyses Endonucleolytic cleavage at a junction such as a reciprocal single-stranded crossover between two homologous DNA duplexes (Holliday junction).. In terms of biological role, the RuvA-RuvB-RuvC complex processes Holliday junction (HJ) DNA during genetic recombination and DNA repair. Endonuclease that resolves HJ intermediates. Cleaves cruciform DNA by making single-stranded nicks across the HJ at symmetrical positions within the homologous arms, yielding a 5'-phosphate and a 3'-hydroxyl group; requires a central core of homology in the junction. The consensus cleavage sequence is 5'-(A/T)TT(C/G)-3'. Cleavage occurs on the 3'-side of the TT dinucleotide at the point of strand exchange. HJ branch migration catalyzed by RuvA-RuvB allows RuvC to scan DNA until it finds its consensus sequence, where it cleaves and resolves the cruciform DNA. The protein is Crossover junction endodeoxyribonuclease RuvC of Actinobacillus succinogenes (strain ATCC 55618 / DSM 22257 / CCUG 43843 / 130Z).